The sequence spans 251 residues: Pyrroloquinoline-quinone synthase (251 aa).

This sequence belongs to the PqqC family.

The enzyme catalyses 6-(2-amino-2-carboxyethyl)-7,8-dioxo-1,2,3,4,7,8-hexahydroquinoline-2,4-dicarboxylate + 3 O2 = pyrroloquinoline quinone + 2 H2O2 + 2 H2O + H(+). The protein operates within cofactor biosynthesis; pyrroloquinoline quinone biosynthesis. Functionally, ring cyclization and eight-electron oxidation of 3a-(2-amino-2-carboxyethyl)-4,5-dioxo-4,5,6,7,8,9-hexahydroquinoline-7,9-dicarboxylic-acid to PQQ. The chain is Pyrroloquinoline-quinone synthase from Cronobacter sakazakii (strain ATCC BAA-894) (Enterobacter sakazakii).